The primary structure comprises 156 residues: MKITLLAVGTKMPRWVDEAYADYAKRLPREVQLELKEIKPEKRGGGVTAEKGIAAEHARLMAALPPRAKLVVLDERGRNWTTMQLADNLKGWLADGQDIAIVIGGADGTAAELKSRADILLQLSAMTLPHGMVRVLLAEQVYRAVSILNGHPYHRE.

S-adenosyl-L-methionine-binding positions include Leu-73, Gly-104, and 123-128 (LSAMTL).

Belongs to the RNA methyltransferase RlmH family. As to quaternary structure, homodimer.

Its subcellular location is the cytoplasm. The enzyme catalyses pseudouridine(1915) in 23S rRNA + S-adenosyl-L-methionine = N(3)-methylpseudouridine(1915) in 23S rRNA + S-adenosyl-L-homocysteine + H(+). Functionally, specifically methylates the pseudouridine at position 1915 (m3Psi1915) in 23S rRNA. In Laribacter hongkongensis (strain HLHK9), this protein is Ribosomal RNA large subunit methyltransferase H.